A 402-amino-acid polypeptide reads, in one-letter code: Dihydrolipoyllysine-residue acetyltransferase component of pyruvate dehydrogenase complex (402 aa).

Residues 2 to 77 enclose the Lipoyl-binding domain; the sequence is ANEFKFTDVG…HIGQVMAVID (76 aa). K43 bears the N6-lipoyllysine mark. Disordered stretches follow at residues 82–110 and 143–172; these read AAAP…APVT and PQPT…PSGE. Pro residues-rich tracts occupy residues 87 to 107 and 143 to 162; these read APQP…PTPA and PQPT…PTPA. Residue H374 is part of the active site.

This sequence belongs to the 2-oxoacid dehydrogenase family. In terms of assembly, forms a 24-polypeptide structural core with octahedral symmetry. (R)-lipoate is required as a cofactor.

It catalyses the reaction N(6)-[(R)-dihydrolipoyl]-L-lysyl-[protein] + acetyl-CoA = N(6)-[(R)-S(8)-acetyldihydrolipoyl]-L-lysyl-[protein] + CoA. Functionally, the pyruvate dehydrogenase complex catalyzes the overall conversion of pyruvate to acetyl-CoA and CO(2). It contains multiple copies of three enzymatic components: pyruvate dehydrogenase (E1), dihydrolipoamide acetyltransferase (E2) and lipoamide dehydrogenase (E3). This chain is Dihydrolipoyllysine-residue acetyltransferase component of pyruvate dehydrogenase complex (pdhC), found in Mycoplasma pneumoniae (strain ATCC 29342 / M129 / Subtype 1) (Mycoplasmoides pneumoniae).